The primary structure comprises 189 residues: UPF0398 protein BH1768 (189 aa).

It belongs to the UPF0398 family.

The polypeptide is UPF0398 protein BH1768 (Halalkalibacterium halodurans (strain ATCC BAA-125 / DSM 18197 / FERM 7344 / JCM 9153 / C-125) (Bacillus halodurans)).